We begin with the raw amino-acid sequence, 364 residues long: S-adenosylmethionine:tRNA ribosyltransferase-isomerase (364 aa).

Positions 344–364 are disordered; the sequence is ASDKMQETSGRGERPRFDHEI.

This sequence belongs to the QueA family. In terms of assembly, monomer.

Its subcellular location is the cytoplasm. It carries out the reaction 7-aminomethyl-7-carbaguanosine(34) in tRNA + S-adenosyl-L-methionine = epoxyqueuosine(34) in tRNA + adenine + L-methionine + 2 H(+). It participates in tRNA modification; tRNA-queuosine biosynthesis. Its function is as follows. Transfers and isomerizes the ribose moiety from AdoMet to the 7-aminomethyl group of 7-deazaguanine (preQ1-tRNA) to give epoxyqueuosine (oQ-tRNA). This chain is S-adenosylmethionine:tRNA ribosyltransferase-isomerase, found in Thioalkalivibrio sulfidiphilus (strain HL-EbGR7).